The primary structure comprises 296 residues: Ribonuclease HIII (296 aa).

The region spanning 80–296 is the RNase H type-2 domain; sequence LALIGSDEVG…NTKKAYQRLK (217 aa). The a divalent metal cation site is built by Asp-86, Glu-87, and Asp-191.

This sequence belongs to the RNase HII family. RnhC subfamily. It depends on Mn(2+) as a cofactor. The cofactor is Mg(2+).

The protein resides in the cytoplasm. The catalysed reaction is Endonucleolytic cleavage to 5'-phosphomonoester.. Endonuclease that specifically degrades the RNA of RNA-DNA hybrids. This is Ribonuclease HIII from Streptococcus thermophilus (strain CNRZ 1066).